A 3498-amino-acid polypeptide reads, in one-letter code: Mediator of RNA polymerase II transcription subunit 12 (3498 aa).

6 disordered regions span residues 365 to 456 (IKQH…HTDI), 497 to 764 (GGVG…EPEK), 2209 to 2576 (AKKR…AYMK), 2589 to 2620 (ENNRIMEEQQREREMEAARKEAARRAAEEAYA), 2637 to 2889 (LRKE…KEKQ), and 2917 to 3498 (NVAG…PNQY). Positions 368–394 (HEKRKAGSLKKSERRRRRGLSKNRPKK) are enriched in basic residues. The segment covering 404–416 (SLDHDKVQIKQEP) has biased composition (basic and acidic residues). 2 stretches are compositionally biased toward polar residues: residues 424–440 (GQQSDNSMDYDSFSHQY) and 512–536 (SNPTPTETVNTQPQIDFESSPSASP). Residues 539 to 570 (SVDKENECEKKEDESKTKEKNKDKEKDKEKEK) adopt a coiled-coil conformation. Basic and acidic residues-rich tracts occupy residues 540–578 (VDKENECEKKEDESKTKEKNKDKEKDKEKEKSVDEHTND) and 593–614 (ANDKTDASEKQKLVEEEPTGKE). Residues 621 to 630 (SKTAKTSTSA) show a composition bias toward low complexity. Basic and acidic residues-rich tracts occupy residues 691–719 (EVDKAPEVDKSEKEHEDDIMIIESNKKAD), 738–764 (ESEKKKDGEEERDKNKDTDVADNEPEK), and 2209–2285 (AKKR…KRAS). A required for nuclear localization region spans residues 2142–3498 (QTTRLDKVAK…YPNQQPPNQY (1357 aa)). The stretch at 2203–2290 (VIDEEEAKKR…EKRASDAAAA (88 aa)) forms a coiled coil. 2 stretches are compositionally biased toward low complexity: residues 2342 to 2360 (RADTAQAAAATTQWNAPIA) and 2409 to 2431 (LADASAAAAAANSNAMGNTSSMP). The stretch at 2395–2420 (RNLLNRKKEEKRNSLADASAAAAAAN) forms a coiled coil. The span at 2444–2456 (QSAGATQQLQGMQ) shows a compositional bias: polar residues. Over residues 2459–2479 (QMGGSMSGMNQNMGGMNQSMS) the composition is skewed to low complexity. A compositionally biased stretch (polar residues) spans 2514 to 2530 (NRSSGPVSSETRQQIME). Basic and acidic residues-rich tracts occupy residues 2547–2576 (QKQRDAREREAREREAREHQERMQREAYMK), 2589–2616 (ENNRIMEEQQREREMEAARKEAARRAAE), and 2637–2724 (LRKE…EQQR). Low complexity predominate over residues 2725-2770 (RSQQNPYMNQQGQYSQQPPPSYQQSSYPNNYQPGQQGNQPPNYQQP). A compositionally biased stretch (polar residues) spans 2771-2783 (SHQSMQQGHQAGY). The segment covering 2784–2810 (QQTSNQMQMNMQQQQNRQQGGPQQSFS) has biased composition (low complexity). 4 stretches are compositionally biased toward polar residues: residues 2816 to 2827 (NQPSQPGYSGYN), 2842 to 2852 (RNPFGNQQDMQ), 2868 to 2881 (HAQQYQHTQNQLSL), and 2926 to 2956 (GQQQLGASDQMGTSQLPGASTSRMNQGSSNP). Low complexity predominate over residues 2957-2993 (QGGMQSYQQQQPVLGQPGPIQTGQSTQQQIPAQSQQQ). The segment covering 2994-3009 (YNSGRPQMHTTPTKND) has biased composition (polar residues). The span at 3039 to 3100 (GQNVPGGYQQ…NVSQSQSAAQ (62 aa)) shows a compositional bias: low complexity. Positions 3103–3127 (RPSQDSAYQQSGYNQTGNQSYQRPD) are enriched in polar residues. Low complexity-rich tracts occupy residues 3128–3184 (QQQQ…SAQY) and 3192–3223 (QGYDQQQQGQIAPQQAQNPQASQSYGQQQTQQ). Over residues 3231-3253 (SGYTANSGGSSNILNQSMEESGL) the composition is skewed to polar residues. Residues 3254–3311 (NQGFSGASSNASSQQGGSSQMQQSGYGMPGNQMQMQQNQKQQVQRGMPTGMGQTNMGQ) are compositionally biased toward low complexity. Residues 3312–3321 (SGMGQSGMGQ) are compositionally biased toward gly residues. Low complexity-rich tracts occupy residues 3336–3356 (QGQQSQQPQQPQVSQQQNQRG) and 3370–3408 (QQQHQPQQSQISQQQQQQDQYRRMQAAQMQQQPTAQGQQ). Polar residues predominate over residues 3414–3425 (PSQQQSGAAYSN). Residues 3426 to 3436 (QMQFQGVRQGQ) are compositionally biased toward low complexity. Residues 3437–3446 (QGMGGMGGSG) are compositionally biased toward gly residues. Low complexity predominate over residues 3447 to 3498 (QQQPQTQPHGSNQYYQQQQDQRMQQQPQQPGQQQQHGYGMGQYPNQQPPNQY).

Belongs to the Mediator complex subunit 12 family. As to quaternary structure, component of the Mediator complex. In terms of tissue distribution, ubiquitously expressed.

It localises to the nucleus. Its function is as follows. Component of the Mediator complex, a coactivator involved in regulated gene transcription of nearly all RNA polymerase II-dependent genes. Mediator functions as a bridge to convey information from gene-specific regulatory proteins to the basal RNA polymerase II transcription machinery. Mediator is recruited to promoters by direct interactions with regulatory proteins and serves as a scaffold for the assembly of a functional preinitiation complex with RNA polymerase II and the general transcription factors. Functions downstream of let-60 during vulval induction. Required for asymmetric division of T-cells and for hypodermal development. The sequence is that of Mediator of RNA polymerase II transcription subunit 12 (dpy-22) from Caenorhabditis elegans.